We begin with the raw amino-acid sequence, 428 residues long: Adenylosuccinate synthetase (428 aa).

Residues 12-18 (GDEGKGK) and 40-42 (GHT) each bind GTP. Aspartate 13 serves as the catalytic Proton acceptor. Positions 13 and 40 each coordinate Mg(2+). Residues 13-16 (DEGK), 38-41 (NAGH), threonine 129, arginine 143, glutamine 224, threonine 239, and arginine 303 each bind IMP. Histidine 41 acts as the Proton donor in catalysis. 299–305 (VTTGRSR) is a substrate binding site. GTP-binding positions include arginine 305, 331–333 (KLD), and 413–415 (GVG).

Belongs to the adenylosuccinate synthetase family. As to quaternary structure, homodimer. Mg(2+) is required as a cofactor.

The protein localises to the cytoplasm. It carries out the reaction IMP + L-aspartate + GTP = N(6)-(1,2-dicarboxyethyl)-AMP + GDP + phosphate + 2 H(+). Its pathway is purine metabolism; AMP biosynthesis via de novo pathway; AMP from IMP: step 1/2. Its function is as follows. Plays an important role in the de novo pathway of purine nucleotide biosynthesis. Catalyzes the first committed step in the biosynthesis of AMP from IMP. The chain is Adenylosuccinate synthetase from Saccharopolyspora erythraea (strain ATCC 11635 / DSM 40517 / JCM 4748 / NBRC 13426 / NCIMB 8594 / NRRL 2338).